The sequence spans 219 residues: Putative germin-like protein 8-1 (219 aa).

Residues 1-23 (MASFISFLLLAALIGMASWQAIA) form the signal peptide. A disulfide bridge links Cys33 with Cys48. 2 N-linked (GlcNAc...) asparagine glycosylation sites follow: Asn53 and Asn79. The region spanning 63–215 (AMLDKPRDTA…AFQVDKKIID (153 aa)) is the Cupin type-1 domain. 4 residues coordinate Mn(2+): His112, His114, Glu119, and His160.

The protein belongs to the germin family. As to quaternary structure, oligomer (believed to be a pentamer but probably hexamer).

The protein resides in the secreted. Its subcellular location is the extracellular space. It is found in the apoplast. Its function is as follows. Plays a role in broad-spectrum disease resistance. Probably has no oxalate oxidase activity even if the active site is conserved. This is Putative germin-like protein 8-1 from Oryza sativa subsp. japonica (Rice).